The primary structure comprises 194 residues: Cytochrome c biogenesis ATP-binding export protein CcmA (194 aa).

Residues 5–194 (LALDGVACIR…LDELVMGVLA (190 aa)) form the ABC transporter domain. 37 to 44 (GPNGAGKS) lines the ATP pocket.

It belongs to the ABC transporter superfamily. CcmA exporter (TC 3.A.1.107) family. As to quaternary structure, the complex is composed of two ATP-binding proteins (CcmA) and two transmembrane proteins (CcmB).

The protein localises to the cell inner membrane. The catalysed reaction is heme b(in) + ATP + H2O = heme b(out) + ADP + phosphate + H(+). Its function is as follows. Part of the ABC transporter complex CcmAB involved in the biogenesis of c-type cytochromes; once thought to export heme, this seems not to be the case, but its exact role is uncertain. Responsible for energy coupling to the transport system. In Sphingopyxis alaskensis (strain DSM 13593 / LMG 18877 / RB2256) (Sphingomonas alaskensis), this protein is Cytochrome c biogenesis ATP-binding export protein CcmA.